Consider the following 585-residue polypeptide: Arginine--tRNA ligase (585 aa).

The 'HIGH' region signature appears at 131 to 141 (ANPTGPMHVGH).

Belongs to the class-I aminoacyl-tRNA synthetase family. Monomer.

It is found in the cytoplasm. It catalyses the reaction tRNA(Arg) + L-arginine + ATP = L-arginyl-tRNA(Arg) + AMP + diphosphate. The sequence is that of Arginine--tRNA ligase from Sinorhizobium medicae (strain WSM419) (Ensifer medicae).